The sequence spans 813 residues: Polycomb group protein FERTILIZATION-INDEPENDENT SEED 2 (813 aa).

Residues methionine 1–aspartate 27 form a disordered region. Residues serine 15–aspartate 26 are compositionally biased toward acidic residues. The C2H2-type zinc finger occupies cysteine 134–histidine 155. 3 disordered regions span residues serine 197–asparagine 216, aspartate 232–isoleucine 261, and glutamate 274–leucine 648. Residues aspartate 232–aspartate 246 show a composition bias toward basic and acidic residues. An A-1 repeat occupies histidine 243 to isoleucine 264. Residues histidine 243–arginine 542 are 12 X approximate repeat A. The stretch at leucine 265 to proline 281 is one B-1 repeat. The tract at residues leucine 265–threonine 640 is 7 X approximate repeat B. Residues histidine 282–threonine 304 form an A-2 repeat. Basic and acidic residues-rich tracts occupy residues serine 296 to asparagine 307, histidine 319 to glutamate 331, and lysine 344 to aspartate 353. The A-3 repeat unit spans residues histidine 305–threonine 327. The A-4 repeat unit spans residues histidine 328–threonine 349. An A-5 repeat occupies histidine 350 to isoleucine 371. One copy of the B-2 repeat lies at leucine 372 to arginine 388. A compositionally biased stretch (basic residues) spans arginine 388–lysine 402. A B-3 repeat occupies alanine 403–leucine 419. 2 stretches are compositionally biased toward basic and acidic residues: residues serine 414–aspartate 423 and serine 453–aspartate 462. One copy of the A-6 repeat lies at histidine 420–isoleucine 441. One copy of the B-4 repeat lies at leucine 442 to proline 458. An A-7 repeat occupies histidine 459 to arginine 481. The segment covering histidine 472–arginine 481 has biased composition (basic residues). One copy of the A-8 repeat lies at lysine 482–isoleucine 502. A compositionally biased stretch (polar residues) spans aspartate 501 to glutamate 512. The stretch at leucine 503–arginine 519 is one B-5 repeat. Residues serine 514–aspartate 523 are compositionally biased toward basic and acidic residues. The A-9 repeat unit spans residues histidine 520–arginine 542. The stretch at lysine 543–isoleucine 563 is one A-10 repeat. One copy of the B-6 repeat lies at leucine 564–proline 579. Residues serine 574–valine 586 show a composition bias toward basic and acidic residues. One copy of the A-11 repeat lies at histidine 580 to threonine 601. The segment covering histidine 593–histidine 602 has biased composition (basic residues). Residues histidine 602 to isoleucine 623 form an A-12 repeat. The B-7 repeat unit spans residues leucine 624–threonine 640. The VEFS-box stretch occupies residues leucine 648–threonine 783.

This sequence belongs to the VEFS (VRN2-EMF2-FIS2-SU(Z)12) family. Probably indirectly associated with FIE and/or MEA. In plants, PcG complexes are probably composed of a member of the EZ family (CLF or MEA), FIE, and a member of the VEFS family (FIS2, VRN2 or EMF2). In terms of tissue distribution, weakly expressed. Expressed in late siliques.

The protein resides in the nucleus. Polycomb group (PcG) protein. PcG proteins act by forming multiprotein complexes, which are required to maintain the transcriptionally repressive state of homeotic genes throughout development. PcG proteins are not required to initiate repression, but to maintain it during later stages of development. They probably act via the methylation of histones, rendering chromatin heritably changed in its expressibility. Required to prevent the proliferation of the central cell by repressing unknown target genes before fertilization. Regulates the anteroposterior organization of the endosperm. This Arabidopsis thaliana (Mouse-ear cress) protein is Polycomb group protein FERTILIZATION-INDEPENDENT SEED 2.